We begin with the raw amino-acid sequence, 582 residues long: Threonine--tRNA ligase (582 aa).

The segment at 185–478 (DHRKLGKELE…LTEQYGGAFP (294 aa)) is catalytic. The Zn(2+) site is built by Cys-278, His-329, and His-455.

This sequence belongs to the class-II aminoacyl-tRNA synthetase family. As to quaternary structure, homodimer. The cofactor is Zn(2+).

It is found in the cytoplasm. The catalysed reaction is tRNA(Thr) + L-threonine + ATP = L-threonyl-tRNA(Thr) + AMP + diphosphate + H(+). Functionally, catalyzes the attachment of threonine to tRNA(Thr) in a two-step reaction: L-threonine is first activated by ATP to form Thr-AMP and then transferred to the acceptor end of tRNA(Thr). Also edits incorrectly charged L-seryl-tRNA(Thr). The sequence is that of Threonine--tRNA ligase from Dehalococcoides mccartyi (strain CBDB1).